The chain runs to 113 residues: Head virion protein G6P (113 aa).

3 consecutive transmembrane segments (helical) span residues 13 to 33, 36 to 56, and 69 to 89; these read FIGWLAGALIAYVAKFFTLGI, IALAISLFLGLIIGLNGLLVS, and IASAVSYVVPANAAPCLYAIF.

This sequence belongs to the inovirus G6P protein family. Interacts with G3P; this interaction is required for proper integration of G3P and G6P into the virion.

Its subcellular location is the virion. The protein localises to the host membrane. Plays essential roles both in the entry of the viral genome into the bacterial host and in budding process. The formation of the G3P-G6P complex termed adsorption complex is essential for correct termination of filamentous phage assembly. The sequence is that of Head virion protein G6P (VI) from Escherichia phage If1 (Bacteriophage If1).